Here is a 365-residue protein sequence, read N- to C-terminus: Peptide chain release factor 2 (365 aa).

N5-methylglutamine is present on Q252.

This sequence belongs to the prokaryotic/mitochondrial release factor family. In terms of processing, methylated by PrmC. Methylation increases the termination efficiency of RF2.

Its subcellular location is the cytoplasm. Functionally, peptide chain release factor 2 directs the termination of translation in response to the peptide chain termination codons UGA and UAA. In Pseudoalteromonas translucida (strain TAC 125), this protein is Peptide chain release factor 2.